The sequence spans 350 residues: HTH-type DNA-binding transcriptional activator EutR (350 aa).

The region spanning 243 to 344 is the HTH araC/xylS-type domain; the sequence is SRAREYVLEN…AEKPSLTLHQ (102 aa). 2 consecutive DNA-binding regions (H-T-H motif) follow at residues 260–281 and 311–334; these read LDLC…HAIL and VKDA…QQLF.

Its pathway is amine and polyamine degradation; ethanolamine degradation. Activates the transcription of the eut operon, allowing utilization of ethanolamine (EA). Positively regulates its own transcription. Probably binds EA and vitamin B12 as effectors. Competes with ethanolamine ammonia-lysase (EAL, the first enzyme in the EA degradation pathway) for adenosylcobalamin. Ethanolamine-associated signaling mediated via this protein, but not EA degradation, impacts S.typhimurium survival within macrophages. Binds the promoter of ssrB and eutS in vitro; in mouse infection models binding to ssrB probably induces all 4 operons of pathogenicity island SPI-2. In terms of biological role, expression of the eut operon allows this bacteria to use ethanolamine (EA) as a carbon, nitrogen and energy source. It relies on cobalamin (vitamin B12) both as a cofactor for the ethanolamine ammonia-lyase (EAL) activity and to induce the operon. EA enhances bacterial survival in macrophages in a concentration-dependent manner, suggesting it is an important nutrient in infection. This Salmonella typhimurium (strain LT2 / SGSC1412 / ATCC 700720) protein is HTH-type DNA-binding transcriptional activator EutR.